The primary structure comprises 672 residues: Acetoacetyl-CoA synthetase (672 aa).

The protein belongs to the ATP-dependent AMP-binding enzyme family.

Its subcellular location is the cytoplasm. The protein localises to the cytosol. It carries out the reaction acetoacetate + ATP + CoA = acetoacetyl-CoA + AMP + diphosphate. Functionally, activates acetoacetate to acetoacetyl-CoA. The chain is Acetoacetyl-CoA synthetase (aacs) from Xenopus tropicalis (Western clawed frog).